The primary structure comprises 335 residues: Mitochondrial amidoxime reducing component 2 (335 aa).

A mitochondrion-targeting transit peptide spans 1 to 35; that stretch reads MGASSSSALARLGLPARPWPRWLGVAALGLAAVAL. Residues Lys-59, Lys-138, and Lys-144 each participate in a glycyl lysine isopeptide (Lys-Gly) (interchain with G-Cter in ubiquitin) cross-link. Residue Lys-156 is modified to N6-acetyllysine; alternate. Lys-156 participates in a covalent cross-link: Glycyl lysine isopeptide (Lys-Gly) (interchain with G-Cter in ubiquitin); alternate. Glycyl lysine isopeptide (Lys-Gly) (interchain with G-Cter in ubiquitin) cross-links involve residues Lys-166, Lys-173, Lys-187, Lys-287, and Lys-294. Positions 188-334 constitute an MOSC domain; it reads GRTSRKLLPT…LRVGDPVYRM (147 aa).

In terms of assembly, component of a complex composed of cytochrome b5, NADH-cytochrome b5 reductase (CYB5R3) and MTARC2. Mo-molybdopterin serves as cofactor. Ubiquitinated by PRKN during mitophagy, leading to its degradation and enhancement of mitophagy. Deubiquitinated by USP30.

It is found in the mitochondrion outer membrane. The protein resides in the peroxisome. It catalyses the reaction N(omega)-hydroxy-L-arginine + 2 Fe(II)-[cytochrome b5] + 2 H(+) = L-arginine + 2 Fe(III)-[cytochrome b5] + H2O. In terms of biological role, catalyzes the reduction of N-oxygenated molecules, acting as a counterpart of cytochrome P450 and flavin-containing monooxygenases in metabolic cycles. As a component of prodrug-converting system, reduces a multitude of N-hydroxylated prodrugs particularly amidoximes, leading to increased drug bioavailability. May be involved in mitochondrial N(omega)-hydroxy-L-arginine (NOHA) reduction, regulating endogenous nitric oxide levels and biosynthesis. Postulated to cleave the N-OH bond of N-hydroxylated substrates in concert with electron transfer from NADH to cytochrome b5 reductase then to cytochrome b5, the ultimate electron donor that primes the active site for substrate reduction. The sequence is that of Mitochondrial amidoxime reducing component 2 from Homo sapiens (Human).